The following is a 29-amino-acid chain: Cyclotide psyleio C (29 aa).

Positions 1 to 29 (GDLPVCGETCFGGTCNTPGCVCAWPVCTR) form a cross-link, cyclopeptide (Gly-Arg). Cystine bridges form between Cys-6-Cys-20, Cys-10-Cys-22, and Cys-15-Cys-27.

Post-translationally, this is a cyclic peptide.

Functionally, probably participates in a plant defense mechanism. This chain is Cyclotide psyleio C, found in Psychotria leiocarpa.